We begin with the raw amino-acid sequence, 753 residues long: Eukaryotic translation initiation factor 3 subunit B (753 aa).

The region spanning 42–129 (TMLVVDNIPI…NVLHVNRFGD (88 aa)) is the RRM domain. WD repeat units lie at residues 142-185 (DLPS…WWNG), 203-241 (NSKW…GPIG), 321-362 (DTQS…LLDR), 537-580 (LDSK…DERR), and 595-640 (GEHY…LLHE). Residues 723–753 (KSKAKIDVKGQEARVEEWVEELIDETEELSM) are a coiled coil.

Belongs to the eIF-3 subunit B family. In terms of assembly, component of the eukaryotic translation initiation factor 3 (eIF-3) complex.

The protein localises to the cytoplasm. Its function is as follows. RNA-binding component of the eukaryotic translation initiation factor 3 (eIF-3) complex, which is involved in protein synthesis of a specialized repertoire of mRNAs and, together with other initiation factors, stimulates binding of mRNA and methionyl-tRNAi to the 40S ribosome. The eIF-3 complex specifically targets and initiates translation of a subset of mRNAs involved in cell proliferation. The protein is Eukaryotic translation initiation factor 3 subunit B of Cryptococcus neoformans var. neoformans serotype D (strain B-3501A) (Filobasidiella neoformans).